The following is an 88-amino-acid chain: Gene 86 protein (88 aa).

The chain is Gene 86 protein (86) from Mycobacterium phage D29 (Mycobacteriophage D29).